The following is a 1091-amino-acid chain: Voltage-dependent calcium channel subunit alpha-2/delta-3 (1091 aa).

The N-terminal stretch at 1-33 (MAGPGSLCCASRGASALLATALLYAALGDVVRS) is a signal peptide. Topologically, residues 34-1068 (EQQIPLSVVK…HPEENARECG (1035 aa)) are extracellular. A glycan (N-linked (GlcNAc...) asparagine) is linked at Asn166. The 183-residue stretch at 256–438 (DVVILVDVSG…ENVMEYLHVL (183 aa)) folds into the VWFA domain. Positions 262, 264, and 266 each coordinate a divalent metal cation. The MIDAS-like motif motif lies at 262–266 (DVSGS). Asn309 carries N-linked (GlcNAc...) asparagine glycosylation. Cys412 and Cys1055 are disulfide-bonded. The Cache domain occupies 452–549 (WTEAYIDSTL…RPLYEEGKKR (98 aa)). N-linked (GlcNAc...) asparagine glycosylation is found at Asn553 and Asn632. Tyr924 carries the phosphotyrosine modification. Residues 1069-1089 (GASSLQAQAALLLLPLVSSLF) form a helical membrane-spanning segment. At 1090–1091 (SR) the chain is on the cytoplasmic side.

This sequence belongs to the calcium channel subunit alpha-2/delta family. As to quaternary structure, dimer formed of alpha-2-2 and delta-2 chains; disulfide-linked. Voltage-dependent calcium channels are multisubunit complexes, consisting of alpha-1 (CACNA1), alpha-2 (CACNA2D), beta (CACNB) and delta (CACNA2D) subunits in a 1:1:1:1 ratio. N-glycosylated. Post-translationally, may be proteolytically processed into subunits alpha-2-3 and delta-3 that are disulfide-linked. It is however unclear whether such cleavage really takes place in vivo and has a functional role. As to expression, brain-specific. Predominantly expressed in the caudate putamen, entorhinal complex, hippocampus and cortex.

The protein resides in the membrane. Functionally, the alpha-2/delta subunit of voltage-dependent calcium channels regulates calcium current density and activation/inactivation kinetics of the calcium channel. Acts as a regulatory subunit for P/Q-type calcium channel (CACNA1A), N-type (CACNA1B), L-type (CACNA1C OR CACNA1D) but not T-type (CACNA1G). In Mus musculus (Mouse), this protein is Voltage-dependent calcium channel subunit alpha-2/delta-3 (Cacna2d3).